The chain runs to 138 residues: ATP synthase epsilon chain (138 aa).

This sequence belongs to the ATPase epsilon chain family. As to quaternary structure, F-type ATPases have 2 components, CF(1) - the catalytic core - and CF(0) - the membrane proton channel. CF(1) has five subunits: alpha(3), beta(3), gamma(1), delta(1), epsilon(1). CF(0) has three main subunits: a, b and c.

The protein localises to the cell membrane. In terms of biological role, produces ATP from ADP in the presence of a proton gradient across the membrane. In Streptococcus equi subsp. equi (strain 4047), this protein is ATP synthase epsilon chain.